Reading from the N-terminus, the 396-residue chain is Enoyl-[acyl-carrier-protein] reductase [NADH] (396 aa).

Residues 48 to 53 (GASTGY), 74 to 75 (FE), 111 to 112 (DA), and 139 to 140 (LA) each bind NAD(+). Tyrosine 225 contacts substrate. Tyrosine 235 serves as the catalytic Proton donor. Residues lysine 244 and 273–275 (VVT) each bind NAD(+).

It belongs to the TER reductase family. As to quaternary structure, monomer.

The catalysed reaction is a 2,3-saturated acyl-[ACP] + NAD(+) = a (2E)-enoyl-[ACP] + NADH + H(+). It participates in lipid metabolism; fatty acid biosynthesis. In terms of biological role, involved in the final reduction of the elongation cycle of fatty acid synthesis (FAS II). Catalyzes the reduction of a carbon-carbon double bond in an enoyl moiety that is covalently linked to an acyl carrier protein (ACP). This chain is Enoyl-[acyl-carrier-protein] reductase [NADH], found in Teredinibacter turnerae (strain ATCC 39867 / T7901).